We begin with the raw amino-acid sequence, 381 residues long: 1-deoxy-D-xylulose 5-phosphate reductoisomerase (381 aa).

NADPH-binding residues include serine 10, glycine 11, serine 12, isoleucine 13, glycine 36, lysine 37, asparagine 38, and asparagine 121. Lysine 122 is a binding site for 1-deoxy-D-xylulose 5-phosphate. Position 123 (glutamate 123) interacts with NADPH. Residue aspartate 147 participates in Mn(2+) binding. 1-deoxy-D-xylulose 5-phosphate contacts are provided by serine 148, glutamate 149, serine 173, and histidine 196. Residue glutamate 149 coordinates Mn(2+). Glycine 202 provides a ligand contact to NADPH. 4 residues coordinate 1-deoxy-D-xylulose 5-phosphate: serine 209, asparagine 214, lysine 215, and glutamate 218. Glutamate 218 is a Mn(2+) binding site.

Belongs to the DXR family. Mg(2+) is required as a cofactor. It depends on Mn(2+) as a cofactor.

The catalysed reaction is 2-C-methyl-D-erythritol 4-phosphate + NADP(+) = 1-deoxy-D-xylulose 5-phosphate + NADPH + H(+). The protein operates within isoprenoid biosynthesis; isopentenyl diphosphate biosynthesis via DXP pathway; isopentenyl diphosphate from 1-deoxy-D-xylulose 5-phosphate: step 1/6. Functionally, catalyzes the NADPH-dependent rearrangement and reduction of 1-deoxy-D-xylulose-5-phosphate (DXP) to 2-C-methyl-D-erythritol 4-phosphate (MEP). The chain is 1-deoxy-D-xylulose 5-phosphate reductoisomerase from Geobacillus sp. (strain WCH70).